A 638-amino-acid chain; its full sequence is Chaperone protein HtpG (638 aa).

Residues 1 to 344 (MQKKETLEFQ…SNDLPLNVSR (344 aa)) form an a; substrate-binding region. Residues 345–560 (EILQNNENIY…ENDITTQMSK (216 aa)) are b. A c region spans residues 561-638 (LLISTGQESP…LLLSNIIRLN (78 aa)).

Belongs to the heat shock protein 90 family. In terms of assembly, homodimer.

The protein localises to the cytoplasm. Functionally, molecular chaperone. Has ATPase activity. The chain is Chaperone protein HtpG from Wigglesworthia glossinidia brevipalpis.